Reading from the N-terminus, the 453-residue chain is Serine/threonine-protein phosphatase 2A 55 kDa regulatory subunit B delta isoform (453 aa).

WD repeat units follow at residues 32–71, 97–138, 181–219, and 230–270; these read AEADIISTVEFNYSGDLLATGDKGGRVVIFQREQENKGRA, EIEE…KRAE, AHTYHINSISVNSDHETYLSADDLRINLWHLEITDRSFN, and ELTE…LCDR. The residue at position 285 (serine 285) is a Phosphoserine. 3 WD repeats span residues 289–327, 344–385, and 420–452; these read EIISSISDVKFSHSGRYMMTRDYLSVKVWDLNMEGRPVE, ENDC…DVTL, and DFNKKILHTAWHPMESIIAVAATNNLYIFQDKI. The residue at position 305 (tyrosine 305) is a Phosphotyrosine. Threonine 308 is subject to Phosphothreonine. The tract at residues 385–406 is disordered; the sequence is LEASRENSKPRASLKPRKVCSG.

It belongs to the phosphatase 2A regulatory subunit B family. In terms of assembly, PP2A consists of a common heterodimeric core enzyme, composed of a 36 kDa catalytic subunit (subunit C) and a 65 kDa constant regulatory subunit (PR65 or subunit A), that associates with a variety of regulatory subunits. Proteins that associate with the core dimer include three families of regulatory subunits B (the R2/B/PR55/B55, R3/B''/PR72/PR130/PR59 and R5/B'/B56 families), the 48 kDa variable regulatory subunit, viral proteins, and cell signaling molecules. Interacts with ENSA (when phosphorylated at 'Ser-67') and ARPP19 (when phosphorylated at 'Ser-62'), leading to inhibit PP2A activity. Interacts with IER5. In terms of tissue distribution, widely expressed with high levels in brain, heart, placenta, skeletal muscle, testis, thymus and spleen.

It is found in the cytoplasm. In terms of biological role, substrate-recognition subunit of protein phosphatase 2A (PP2A) that plays a key role in cell cycle by controlling mitosis entry and exit. Involved in chromosome clustering during late mitosis by mediating dephosphorylation of MKI67. The activity of PP2A complexes containing PPP2R2D (PR55-delta) fluctuate during the cell cycle: the activity is high in interphase and low in mitosis. In Rattus norvegicus (Rat), this protein is Serine/threonine-protein phosphatase 2A 55 kDa regulatory subunit B delta isoform (Ppp2r2d).